A 22-amino-acid polypeptide reads, in one-letter code: Dioicin-1 (22 aa).

It is found in the secreted. It localises to the extracellular space. Its subcellular location is the golgi apparatus. The protein localises to the vacuole. It catalyses the reaction Endohydrolysis of the N-glycosidic bond at one specific adenosine on the 28S rRNA.. In terms of biological role, nicks pBR322 dsDNA. Has adenine polynucleotide glycosidase activity on herring sperm ssDNA. The chain is Dioicin-1 from Phytolacca dioica (Bella sombra tree).